Consider the following 240-residue polypeptide: Transcriptional activator protein VanR (240 aa).

Positions 169–234 constitute an HTH luxR-type domain; that stretch reads DAKPRAVLTA…QAITKAILGG (66 aa). The segment at residues 193-212 is a DNA-binding region (H-T-H motif); that stretch reads AWEIATIINTSERTVKFHFS.

Belongs to the autoinducer-regulated transcriptional regulatory protein family.

Functionally, probable transcriptional activator. Binds to autoinducer molecule ODHL. This Vibrio anguillarum (Listonella anguillarum) protein is Transcriptional activator protein VanR (vanR).